Consider the following 210-residue polypeptide: FMN-dependent NADH:quinone oxidoreductase 8 (210 aa).

Residues Ser-10 and 16 to 18 (SIS) each bind FMN.

It belongs to the azoreductase type 1 family. As to quaternary structure, homodimer. FMN is required as a cofactor.

It catalyses the reaction 2 a quinone + NADH + H(+) = 2 a 1,4-benzosemiquinone + NAD(+). The enzyme catalyses N,N-dimethyl-1,4-phenylenediamine + anthranilate + 2 NAD(+) = 2-(4-dimethylaminophenyl)diazenylbenzoate + 2 NADH + 2 H(+). Functionally, quinone reductase that provides resistance to thiol-specific stress caused by electrophilic quinones. Also exhibits azoreductase activity. Catalyzes the reductive cleavage of the azo bond in aromatic azo compounds to the corresponding amines. The protein is FMN-dependent NADH:quinone oxidoreductase 8 of Burkholderia lata (strain ATCC 17760 / DSM 23089 / LMG 22485 / NCIMB 9086 / R18194 / 383).